The primary structure comprises 377 residues: 2-aminoethylphosphonate--pyruvate transaminase (377 aa).

Lys194 carries the post-translational modification N6-(pyridoxal phosphate)lysine.

Belongs to the class-V pyridoxal-phosphate-dependent aminotransferase family. PhnW subfamily. As to quaternary structure, homodimer. The cofactor is pyridoxal 5'-phosphate.

The catalysed reaction is (2-aminoethyl)phosphonate + pyruvate = phosphonoacetaldehyde + L-alanine. In terms of biological role, involved in phosphonate degradation. In Cupriavidus taiwanensis (strain DSM 17343 / BCRC 17206 / CCUG 44338 / CIP 107171 / LMG 19424 / R1) (Ralstonia taiwanensis (strain LMG 19424)), this protein is 2-aminoethylphosphonate--pyruvate transaminase.